The chain runs to 360 residues: MTTTLQQRSSANVWERFCTWITSTENRIYVGWFGVLMIPTLLAATVCFIIAFVAAPPVDIDGIREPVAGSLIYGNNIISGAVVPSSNAIGLHFYPIWEAASLDEWLYNGGPYQLVIFHFLIGCACYLGRQWELSYRLGMRPWICVAYSAPLASATAVFLIYPIGQGSFSDGMPLGISGTFNFMIVFQAEHNILMHPFHMLGVAGVFGGSLFSAMHGSLVTSSLVRETTEIESQNYGYKFGQEEETYNIVAAHGYFGRLIFQYASFNNSRQLHFFLAAWPVIGIWFTALGVSTMAFNLNGFNFNQSIIDSQGRVINTWADIINRANLGMEVMHERNAHNFPLDLAAGEVAPVALTAPAING.

Helical transmembrane passes span 29-46 (YVGWFGVLMIPTLLAATV), 118-133 (HFLIGCACYLGRQWEL), and 142-156 (WICVAYSAPLASATA). Residue His-118 coordinates chlorophyll a. Tyr-126 provides a ligand contact to pheophytin a. [CaMn4O5] cluster is bound by residues Asp-170 and Glu-189. The helical transmembrane segment at 197-218 (FHMLGVAGVFGGSLFSAMHGSL) threads the bilayer. His-198 contacts chlorophyll a. A quinone contacts are provided by residues His-215 and 264–265 (SF). His-215 provides a ligand contact to Fe cation. His-272 is a Fe cation binding site. A helical transmembrane segment spans residues 274–288 (FLAAWPVIGIWFTAL). Residues His-332, Glu-333, Asp-342, and Ala-344 each contribute to the [CaMn4O5] cluster site. A propeptide spanning residues 345–360 (AGEVAPVALTAPAING) is cleaved from the precursor.

Belongs to the reaction center PufL/M/PsbA/D family. PSII is composed of 1 copy each of membrane proteins PsbA, PsbB, PsbC, PsbD, PsbE, PsbF, PsbH, PsbI, PsbJ, PsbK, PsbL, PsbM, PsbT, PsbX, PsbY, PsbZ, Psb30/Ycf12, peripheral proteins PsbO, CyanoQ (PsbQ), PsbU, PsbV and a large number of cofactors. It forms dimeric complexes. Requires The D1/D2 heterodimer binds P680, chlorophylls that are the primary electron donor of PSII, and subsequent electron acceptors. It shares a non-heme iron and each subunit binds pheophytin, quinone, additional chlorophylls, carotenoids and lipids. D1 provides most of the ligands for the Mn4-Ca-O5 cluster of the oxygen-evolving complex (OEC). There is also a Cl(-1) ion associated with D1 and D2, which is required for oxygen evolution. The PSII complex binds additional chlorophylls, carotenoids and specific lipids. as cofactor. In terms of processing, tyr-161 forms a radical intermediate that is referred to as redox-active TyrZ, YZ or Y-Z. C-terminally processed by CtpA; processing is essential to allow assembly of the oxygen-evolving complex and thus photosynthetic growth.

The protein resides in the cellular thylakoid membrane. The catalysed reaction is 2 a plastoquinone + 4 hnu + 2 H2O = 2 a plastoquinol + O2. Photosystem II (PSII) is a light-driven water:plastoquinone oxidoreductase that uses light energy to abstract electrons from H(2)O, generating O(2) and a proton gradient subsequently used for ATP formation. It consists of a core antenna complex that captures photons, and an electron transfer chain that converts photonic excitation into a charge separation. The D1/D2 (PsbA/PsbD) reaction center heterodimer binds P680, the primary electron donor of PSII as well as several subsequent electron acceptors. The protein is Photosystem II protein D1 1 of Nostoc sp. (strain PCC 7120 / SAG 25.82 / UTEX 2576).